The primary structure comprises 640 residues: Threonine--tRNA ligase (640 aa).

The 61-residue stretch at 1-61 (MPVITLPDGS…SNDATLQIIT (61 aa)) folds into the TGS domain. The interval 242 to 533 (DHRKIGKQLD…LIEHYAGVFP (292 aa)) is catalytic. Residues cysteine 333, histidine 384, and histidine 510 each coordinate Zn(2+).

This sequence belongs to the class-II aminoacyl-tRNA synthetase family. Homodimer. Requires Zn(2+) as cofactor.

It localises to the cytoplasm. It catalyses the reaction tRNA(Thr) + L-threonine + ATP = L-threonyl-tRNA(Thr) + AMP + diphosphate + H(+). Its function is as follows. Catalyzes the attachment of threonine to tRNA(Thr) in a two-step reaction: L-threonine is first activated by ATP to form Thr-AMP and then transferred to the acceptor end of tRNA(Thr). Also edits incorrectly charged L-seryl-tRNA(Thr). This chain is Threonine--tRNA ligase, found in Pseudomonas putida (strain ATCC 47054 / DSM 6125 / CFBP 8728 / NCIMB 11950 / KT2440).